The sequence spans 142 residues: Large ribosomal subunit protein bL17 (142 aa).

This sequence belongs to the bacterial ribosomal protein bL17 family. Part of the 50S ribosomal subunit. Contacts protein L32.

The chain is Large ribosomal subunit protein bL17 from Wolbachia pipientis wMel.